The primary structure comprises 77 residues: Large ribosomal subunit protein bL28 (77 aa).

Positions 1–25 (MARVCQVTGKAPMSGNNVSHANNKT) are disordered.

Belongs to the bacterial ribosomal protein bL28 family.

In Paraburkholderia phymatum (strain DSM 17167 / CIP 108236 / LMG 21445 / STM815) (Burkholderia phymatum), this protein is Large ribosomal subunit protein bL28.